The sequence spans 885 residues: Chromatin assembly factor 1 subunit A-B (885 aa).

Disordered stretches follow at residues methionine 1–glutamine 24, glutamate 115–cysteine 157, leucine 176–lysine 361, and valine 536–lysine 605. A compositionally biased stretch (low complexity) spans lysine 12–lysine 21. Composition is skewed to polar residues over residues aspartate 116 to asparagine 128, glutamine 134 to cysteine 157, and serine 182 to serine 193. Composition is skewed to low complexity over residues valine 211–valine 227 and serine 237–threonine 254. Residues serine 251–lysine 376 are a coiled coil. The segment covering serine 255–lysine 361 has biased composition (basic and acidic residues). 2 stretches are compositionally biased toward acidic residues: residues valine 536–glycine 548 and glutamate 557–glycine 573. The segment at cysteine 629–serine 665 is necessary for homodimerization, competence for chromatin assembly.

Belongs to the CHAF1A family. Homodimer.

The protein localises to the nucleus. In terms of biological role, involved in chromatin assembly in DNA replication and DNA repair. The chain is Chromatin assembly factor 1 subunit A-B (chaf1a-b) from Xenopus laevis (African clawed frog).